The primary structure comprises 478 residues: Shikimate biosynthesis protein AroDE (478 aa).

Positions 1-208 (MLCTTISGPS…LKHHYFYNFA (208 aa)) are 3-dehydroquinate dehydratase. 3-dehydroquinate contacts are provided by residues serine 21, 29–31 (EMR), and 55–57 (AWK). The active-site Proton donor/acceptor; for 3-dehydroquinate dehydratase activity is histidine 110. Residue lysine 133 is the Schiff-base intermediate with substrate; for 3-dehydroquinate dehydratase activity of the active site. Residues arginine 171 and glutamine 196 each contribute to the 3-dehydroquinate site. Residues 209–478 (SLSAQSPICA…VLASLFSIAP (270 aa)) are shikimate 5-dehydrogenase. 226–228 (SIG) contributes to the shikimate binding site. Catalysis depends on lysine 277, which acts as the Proton acceptor; for shikimate dehydrogenase activity. Positions 298 and 313 each coordinate shikimate. NADP(+) is bound by residues 337 to 341 (GAGGA), 360 to 362 (NRT), and glycine 435. Glutamine 442 contributes to the shikimate binding site.

This sequence in the N-terminal section; belongs to the type-I 3-dehydroquinase family. It in the C-terminal section; belongs to the shikimate dehydrogenase family.

The catalysed reaction is 3-dehydroquinate = 3-dehydroshikimate + H2O. It catalyses the reaction shikimate + NADP(+) = 3-dehydroshikimate + NADPH + H(+). The protein operates within metabolic intermediate biosynthesis; chorismate biosynthesis; chorismate from D-erythrose 4-phosphate and phosphoenolpyruvate: step 3/7. Its pathway is metabolic intermediate biosynthesis; chorismate biosynthesis; chorismate from D-erythrose 4-phosphate and phosphoenolpyruvate: step 4/7. In terms of biological role, bifunctional enzyme that catalyzes two sequential steps of the aromatic amino acids biosynthetic pathway. In the first reaction, the AroD domain catalyzes the cis-dehydration of 3-dehydroquinate (DHQ) and introduces the first double bond of the aromatic ring to yield 3-dehydroshikimate; in the second reaction, the AroE domain catalyzes the reversible NADPH linked reduction of 3-dehydroshikimate (DHSA) to yield shikimate (SA). This chain is Shikimate biosynthesis protein AroDE, found in Chlamydia trachomatis serovar D (strain ATCC VR-885 / DSM 19411 / UW-3/Cx).